A 342-amino-acid polypeptide reads, in one-letter code: Lumican (342 aa).

The signal sequence occupies residues 1–18 (MNLGVFPLLLALIGGASS). Sulfotyrosine occurs at positions 20, 23, and 34. In terms of domain architecture, LRRNT spans 32–70 (ALYGRSSPNCAPECNCPESYPSAMYCDELKLKSVPMVPP). LRR repeat units follow at residues 71–92 (GIKYLYLRNNQIDHIDDKAFEN), 95–118 (DLQWLILDHNLLENSKIKGKVFSK), 121–141 (QLKKLHINYNNLTESVGPLPK), 142–163 (SLVDLQLTNNKISKLGSFDGLV), 164–185 (NLTFIHLQHNQLKEDAVSAALK), 189–209 (SLEYLDLSFNQMTKLPSGLPV), 210–231 (SLLTLYLDNNKISNIPDEYFKR), and 234–254 (ALQYLRLSHNELADSGVPGNS). N92 is a glycosylation site (N-linked (GlcNAc...) (keratan sulfate) asparagine). N-linked (GlcNAc...) (keratan sulfate) asparagine glycosylation is present at N131. N164 carries an N-linked (GlcNAc...) (keratan sulfate) asparagine glycan. N256 carries N-linked (GlcNAc...) (keratan sulfate) asparagine glycosylation. LRR repeat units lie at residues 259 to 280 (SLLELDLSYNKLKSIPTVNENL) and 281 to 300 (ENYYLEVNELEKFDVKSFCK). Cysteines 299 and 332 form a disulfide. S308 carries the post-translational modification Phosphoserine. Residues 309–330 (KIKHLRLDGNHITQTSLPPDMY) form an LRR 11 repeat.

It belongs to the small leucine-rich proteoglycan (SLRP) family. SLRP class II subfamily. As to quaternary structure, binds to laminin. Sulfated on tyrosine residue(s). In terms of processing, contains keratan sulfate. In terms of tissue distribution, cornea and other tissues.

The protein resides in the secreted. Its subcellular location is the extracellular space. The protein localises to the extracellular matrix. The chain is Lumican (LUM) from Bos taurus (Bovine).